A 296-amino-acid polypeptide reads, in one-letter code: MTDVSNIAPRDKAEILAQALPYIRKFHGKTMVIKYGGNAMTDPALQADFAEDVVLLKLVGINPVVVHGGGPQIEAALKRLGKKGEFIQGMRVTDAETMEIVEWVLGGEVQQDIVGLINQAGGKAVGLTGRDGGMIRAQKLKMRDNTDASKEYDVGQVGDIVSIDPSVVKALQDDAFIPVISPIGFGENNESYNINADVVAAKLATVLKAEKLMMLTNISGVLDKAGNLLTNLSARQIDDLFLDGTISGGMLPKISGALDAAKSGVNSVHIIDGRVPHVLLLEILTDQAFGTMIRSH.

Substrate contacts are provided by residues 69–70 (GG), Arg-91, and Asn-193.

This sequence belongs to the acetylglutamate kinase family. ArgB subfamily.

The protein resides in the cytoplasm. The enzyme catalyses N-acetyl-L-glutamate + ATP = N-acetyl-L-glutamyl 5-phosphate + ADP. It participates in amino-acid biosynthesis; L-arginine biosynthesis; N(2)-acetyl-L-ornithine from L-glutamate: step 2/4. Functionally, catalyzes the ATP-dependent phosphorylation of N-acetyl-L-glutamate. The sequence is that of Acetylglutamate kinase from Albidiferax ferrireducens (strain ATCC BAA-621 / DSM 15236 / T118) (Rhodoferax ferrireducens).